A 206-amino-acid polypeptide reads, in one-letter code: Guanylate kinase (206 aa).

Positions 7 to 185 constitute a Guanylate kinase-like domain; sequence GIVLVLCAPS…AYDELRAAYL (179 aa). ATP is bound at residue 14–21; that stretch reads APSGTGKT.

The protein belongs to the guanylate kinase family.

It is found in the cytoplasm. It catalyses the reaction GMP + ATP = GDP + ADP. Its function is as follows. Essential for recycling GMP and indirectly, cGMP. The sequence is that of Guanylate kinase from Oleidesulfovibrio alaskensis (strain ATCC BAA-1058 / DSM 17464 / G20) (Desulfovibrio alaskensis).